A 180-amino-acid chain; its full sequence is Large ribosomal subunit protein uL10 (180 aa).

It belongs to the universal ribosomal protein uL10 family. As to quaternary structure, part of the ribosomal stalk of the 50S ribosomal subunit. The N-terminus interacts with L11 and the large rRNA to form the base of the stalk. The C-terminus forms an elongated spine to which L12 dimers bind in a sequential fashion forming a multimeric L10(L12)X complex.

Forms part of the ribosomal stalk, playing a central role in the interaction of the ribosome with GTP-bound translation factors. The chain is Large ribosomal subunit protein uL10 (rplJ) from Treponema pallidum (strain Nichols).